The primary structure comprises 241 residues: Accessory protein p30II (241 aa).

2 short sequence motifs (nuclear localization signal) span residues Arg73–Arg78 and Gly91–Arg98. 2 stretches are compositionally biased toward low complexity: residues Cys79–Ser100 and Pro107–Ser136. The disordered stretch occupies residues Cys79–Thr151. The short motif at Leu175 to Arg184 is the Mitochondrial targeting signal element.

It belongs to the HTLV-1 accessory protein p30II family. As to quaternary structure, p30II binds to the KIX domains of CREBBP and EP300.

The protein resides in the host nucleus. Its subcellular location is the host nucleolus. It is found in the host mitochondrion inner membrane. P30II is a multifunctional regulator that sequesters EP300/CREBBP and down-regulates CREB-responsive element (CRE) and Tax-responsive element (TRE) mediated transcription. Specifically binds and represses tax/rex mRNA nuclear export. Since Tax and Rex are positive regulators of viral gene expression, their inhibition by p30II reduces virion production, and allows the virus to escape the host immune surveillance and persist latently in an immune-competent host. Its function is as follows. p13II increases mitochondrial permeability to monovalent cations, producing a rapid, membrane potential-dependent influx of potassium. This could involve a channel-forming activity. Interferes with cell proliferation and transformation and promotes apoptosis induced by ceramide and Fas ligand, probably using the Ras signaling. This Human T-cell leukemia virus 1 (strain Japan ATK-1 subtype A) (HTLV-1) protein is Accessory protein p30II.